Here is a 195-residue protein sequence, read N- to C-terminus: Rac-like GTP-binding protein ARAC4 (195 aa).

GTP contacts are provided by residues 12 to 19, 30 to 37, 59 to 63, and 117 to 120; these read GDGAVGKT, FPTDYVPT, DTAGQ, and TKLD. Positions 34 to 42 match the Effector region motif; it reads YVPTVFDNF. A Cysteine methyl ester modification is found at cysteine 192. Cysteine 192 carries S-geranylgeranyl cysteine lipidation. Residues 193–195 constitute a propeptide, removed in mature form; sequence AFL.

Belongs to the small GTPase superfamily. Rho family. In terms of assembly, interacts with SPK1, ICR1, ICR5 and PIR. As to expression, ubiquitous.

The protein localises to the cytoplasm. It is found in the cell membrane. Its function is as follows. Inactive GDP-bound Rho GTPases reside in the cytosol, are found in a complex with Rho GDP-dissociation inhibitors (Rho GDIs), and are released from the GDI protein in order to translocate to membranes upon activation. Involved in cell polarity control during the actin-dependent tip growth of root hairs, thus regulating root hair length and root hair initiation. Contributes, in a SPK1-dependent manner, to the prevention of cortical microtubules organization into parallel arrays oriented perpendicular to the axis of cell elongation to limit anisotropic cell growth during petal development. May regulate a WAVE complex that activates the Arp2/3 complex. This chain is Rac-like GTP-binding protein ARAC4, found in Arabidopsis thaliana (Mouse-ear cress).